We begin with the raw amino-acid sequence, 88 residues long: MANTVSAKKMTRKIAKRTAINRSRRSRMRTFVRKVEEAIATGDQGQALAALRVAEPEIMRAAQHGIVHKNNASRKVSRLAARVKAIAA.

The protein belongs to the bacterial ribosomal protein bS20 family.

Binds directly to 16S ribosomal RNA. This Methylorubrum populi (strain ATCC BAA-705 / NCIMB 13946 / BJ001) (Methylobacterium populi) protein is Small ribosomal subunit protein bS20.